Here is a 339-residue protein sequence, read N- to C-terminus: 4-hydroxy-2-oxovalerate aldolase (339 aa).

A Pyruvate carboxyltransferase domain is found at 7 to 257; it reads IRIMDTTLRD…QVGVDLYKIM (251 aa). 15–16 lines the substrate pocket; the sequence is RD. Asp16 contributes to the Mn(2+) binding site. His19 acts as the Proton acceptor in catalysis. Ser169 and His196 together coordinate substrate. Residues His196 and His198 each coordinate Mn(2+). Tyr286 provides a ligand contact to substrate.

It belongs to the 4-hydroxy-2-oxovalerate aldolase family.

The enzyme catalyses (S)-4-hydroxy-2-oxopentanoate = acetaldehyde + pyruvate. In Pelotomaculum thermopropionicum (strain DSM 13744 / JCM 10971 / SI), this protein is 4-hydroxy-2-oxovalerate aldolase.